The sequence spans 180 residues: Large ribosomal subunit protein uL6 (180 aa).

Belongs to the universal ribosomal protein uL6 family. As to quaternary structure, part of the 50S ribosomal subunit.

This protein binds to the 23S rRNA, and is important in its secondary structure. It is located near the subunit interface in the base of the L7/L12 stalk, and near the tRNA binding site of the peptidyltransferase center. This Clostridium kluyveri (strain NBRC 12016) protein is Large ribosomal subunit protein uL6.